The sequence spans 167 residues: Crossover junction endodeoxyribonuclease RuvC (167 aa).

Catalysis depends on residues Asp-8, Glu-68, and Asp-140. 3 residues coordinate Mg(2+): Asp-8, Glu-68, and Asp-140.

It belongs to the RuvC family. Homodimer which binds Holliday junction (HJ) DNA. The HJ becomes 2-fold symmetrical on binding to RuvC with unstacked arms; it has a different conformation from HJ DNA in complex with RuvA. In the full resolvosome a probable DNA-RuvA(4)-RuvB(12)-RuvC(2) complex forms which resolves the HJ. Mg(2+) serves as cofactor.

It localises to the cytoplasm. It catalyses the reaction Endonucleolytic cleavage at a junction such as a reciprocal single-stranded crossover between two homologous DNA duplexes (Holliday junction).. In terms of biological role, the RuvA-RuvB-RuvC complex processes Holliday junction (HJ) DNA during genetic recombination and DNA repair. Endonuclease that resolves HJ intermediates. Cleaves cruciform DNA by making single-stranded nicks across the HJ at symmetrical positions within the homologous arms, yielding a 5'-phosphate and a 3'-hydroxyl group; requires a central core of homology in the junction. The consensus cleavage sequence is 5'-(A/T)TT(C/G)-3'. Cleavage occurs on the 3'-side of the TT dinucleotide at the point of strand exchange. HJ branch migration catalyzed by RuvA-RuvB allows RuvC to scan DNA until it finds its consensus sequence, where it cleaves and resolves the cruciform DNA. The chain is Crossover junction endodeoxyribonuclease RuvC from Sinorhizobium medicae (strain WSM419) (Ensifer medicae).